The primary structure comprises 323 residues: Muscleblind-like protein 3 (323 aa).

4 C3H1-type zinc fingers span residues 13–41, 47–73, 177–205, and 213–239; these read WLTL…HPSR, NGRV…HPPP, TDKL…HPLE, and ENSV…HPPA.

The protein belongs to the muscleblind family. As to expression, expressed in fast and slow myotomal muscle, heart, liver, skin, brain and testis.

The protein localises to the nucleus. It localises to the cytoplasm. Its function is as follows. Involved in pre-mRNA alternative splicing regulation. Could inhibit terminal muscle differentiation, acting at approximately the time of myogenin induction. This Takifugu rubripes (Japanese pufferfish) protein is Muscleblind-like protein 3 (mbnl3).